The primary structure comprises 441 residues: C4-dicarboxylate transport protein (441 aa).

The Cytoplasmic portion of the chain corresponds to Met1–Gly30. The chain crosses the membrane as a helical span at residues Ile31 to Asp49. Residues Ala50–Ala68 are Periplasmic-facing. A helical membrane pass occupies residues Thr69–Ala87. The Cytoplasmic portion of the chain corresponds to Met88–Leu99. A helical membrane pass occupies residues Val100 to Asp118. Residues Pro119–Thr149 lie on the Periplasmic side of the membrane. The helical transmembrane segment at Thr150–Val168 threads the bilayer. Residues Leu169–Gly171 are Cytoplasmic-facing. The chain crosses the membrane as a helical span at residues Ile172–Ala190. Topologically, residues Leu191–Gly209 are periplasmic. A helical transmembrane segment spans residues Ala210–Asn228. Residues Leu229 to Phe241 lie on the Cytoplasmic side of the membrane. The chain crosses the membrane as a helical span at residues Leu242–Leu260. At Ser261 to Ala281 the chain is on the periplasmic side. Residues Ala282–Val300 traverse the membrane as a helical segment. The Cytoplasmic segment spans residues Gly301–Thr320. Residues Leu321–Gln339 traverse the membrane as a helical segment. Residues Ile340–Ser350 are Periplasmic-facing. Residues Lys351–Ser369 traverse the membrane as a helical segment. At Val370–Gly378 the chain is on the cytoplasmic side. Residues Met379 to Phe398 form a helical membrane-spanning segment. Residues Val399–Thr405 lie on the Periplasmic side of the membrane. Residues Ile406–Leu424 form a helical membrane-spanning segment. Residues Gly425 to Glu441 are Cytoplasmic-facing.

The protein belongs to the dicarboxylate/amino acid:cation symporter (DAACS) (TC 2.A.23) family.

The protein localises to the cell inner membrane. Responsible for the transport of dicarboxylates such as succinate, fumarate, and malate from the periplasm across the inner membrane. This transport system plays an important role in the energy supply of rhizobium-legume symbionts. The sequence is that of C4-dicarboxylate transport protein (dctA) from Rhizobium meliloti (strain 1021) (Ensifer meliloti).